A 238-amino-acid chain; its full sequence is Complement C1q-like protein 4 (238 aa).

The first 15 residues, 1–15 (MVLLLLVAIPLLVHS), serve as a signal peptide directing secretion. Positions 37–102 (SRGQGPDGAP…PGPGPGGAAP (66 aa)) are disordered. One can recognise a Collagen-like domain in the interval 53 to 96 (PPGAKGEVGRRGKAGLRGPPGPPGPRGPPGEPGRPGPPGPPGPG). Positions 71–96 (PPGPPGPRGPPGEPGRPGPPGPPGPG) are enriched in pro residues. The region spanning 105–238 (GYVPRIAFYA…TFSGFIIYPD (134 aa)) is the C1q domain.

In terms of assembly, forms homooligomers, predominantly dimers or trimers. Forms heterooligomers with C1QL1, C1QL2 and C1QL3, when proteins are coexpressed; this interaction does not occur after secretion. Interacts with ADGRB3. As to expression, highly expressed in testis and adipose tissue, brown adipose tissue expressing higher levels than subcutaneous and visceral white adipose tissue. In gonadal fat pad, expressed at lower levels in adipocytes than in the stromal vascular fraction (VSP), which contains preadipocytes, fibroblasts, endothelial cells and occasional immune cells. Expression exhibits sexually dimorphism, with higher levels in females than in males.

The protein localises to the secreted. In terms of biological role, may regulate the number of excitatory synapses that are formed on hippocampus neurons. Has no effect on inhibitory synapses. May inhibit adipocyte differentiation at an early stage of the process. This chain is Complement C1q-like protein 4 (C1ql4), found in Mus musculus (Mouse).